We begin with the raw amino-acid sequence, 224 residues long: Ornithine decarboxylase antizyme (224 aa).

It belongs to the ODC antizyme family. Interacts with ODC and thereby sterically blocks ODC homodimerization.

Functionally, ornithine decarboxylase (ODC) antizyme protein that negatively regulates ODC activity and intracellular polyamine biosynthesis in response to increased intracellular polyamine levels. Binds to ODC monomers, inhibiting the assembly of the functional ODC homodimer, and targets the monomers for ubiquitin-independent proteolytic destruction by the 26S proteasome. This is Ornithine decarboxylase antizyme (spa1) from Schizosaccharomyces octosporus (Fission yeast).